The chain runs to 1460 residues: MSIKLPLSNINSGGNSNNSSSSNSTSNNNININIGNGIPTNIEKMTFEDSETQKLNIKQQSNNNTSTSVCVSSIHSSSPISSPTSHQVNKSSGSLPPVIKRSPTTTHHHNSSGSNSSSSSSGSNNNNNQIKTSNGMNKPNPTGFLFGSKPRENSQNKIDDNKGVNLAVSTSNSSNNFHKSHSESNIININAPPVETVNMEEIYNNIPSSISMENIRENENNNNSSNNNSNNNNNNNNNNNNSNNINNVNGNKSSLASSTSSISSLSSVSTLSTSNAATNTNTNANTTSTTKTTSTVRSTSPTQFKPRVEFDENNPNAIILSRQRCKSISSPSDFRLNPPSNVHMPTSSLSTSTSTTNVNGLLLPNGVGGVSMSFTPSGLPMTPPTNSSQVDTLQMSTESITIQPSSLDSSSESVSDGLQSVSGSPVTASPSPTISNNTNATTTNNNNNTNTNNNNNNNNNQHNHHHHQHSHSQQHDVYQIKKENFPSSPTSPTLLPSETHDFSSEYSSNPGGKCAICRKPLWSFPISDKSRRCRDCSLVVHRACVPLATECPSAKKSPSKLSVPNGNQSNSSSSSSSSSSSSSSSNSSSSNTKGHSRTPSSPSVSSIPGFQLTSNASQNLHVNSHTLSLLVNGATIDSNHYKRNKKSLEAGARDFHFIFRGCGIPLDEFPLDSYVCGLYSYFAHGRLYLTESYVCFYDGFVFDRTKERTKIIKVSNIASIEKRSSGLNPSAIKIKTFDDQSFIFTHFMHREVAFDDLEGLLIHQESLHFAHSIVANNFPGMNEAIRGQTKRLLSRARLDGHYQIHSKIRCPMPSKEILLMSAIKNNNLDMVVTLLNYYCQVNSDEINSVDSKGYTPLHNAVFSECSDQIFMHLLNQKEVRVRERNMDGNTPLHYFCQKFKSPECQRIVQAMIEKGANINEQNYNGETPLHKAIFNHSVRLLMVYILLKNNANVNIVNNAGESPLHYAVRLGRLDVAKMLLAAGADPTIISLRDRKTALALAVDYDVCPEISDLLRRLDTITTSLEMYELEKFQASLVVEELQKENVVARLDEKLLDKIGCTDKEERRKFLSLKSNRLLIHHPARTQGAKIILKEMETMDIKNGKLIISETELEYTEKIGSGASGKVFKGIYRGRVVAIKVLKSADDEMTREDFLKEFGVLASLESHTIVGLYGVVLEPKICLVMEYCSNGSIYHSIRKNPPSWERFFSFVQQMLAGINALHQSTPQVLHRDIKTLNFLVNHNNKVKVADFGLSRFNTESNQETLNKTRGTSVYCAPEVFEGKEYNERSDMYSMGIVMWEIVYCVVYGCYMIPYQEYNKMFNAFQVALLVNSSKRVLRPTIPIGVPQVLKDLIYCLWDHDVSSRPTATEAMTALAVCEKEYKQNKAQWELVITKKEPTPLPRVAPLPAFPGYRQFYEQNLDIKPIPEEEQIYQEAMEKQRRNQEASANRNQKNKELLNNNN.

7 disordered regions span residues Met-1 to Ile-32, Ile-57 to His-181, Arg-216 to Thr-259, Ser-272 to Asp-311, Ser-329 to Ser-354, Phe-374 to Pro-510, and Cys-551 to Pro-608. Composition is skewed to low complexity over residues Ser-8–Ile-32, Ser-61–His-86, and Ser-111–Asn-128. Residues Gln-129–Asn-140 are compositionally biased toward polar residues. The segment covering Lys-149–Lys-162 has biased composition (basic and acidic residues). Low complexity-rich tracts occupy residues Asn-220 to Thr-259 and Ser-272 to Ser-300. 2 stretches are compositionally biased toward polar residues: residues Ser-329 to Pro-345 and Pro-384 to Pro-404. Over residues Ser-405–Ser-422 the composition is skewed to low complexity. Residues Gly-423–Ile-434 are compositionally biased toward polar residues. The span at Ser-435–Gln-461 shows a compositional bias: low complexity. The segment covering His-462–Ser-472 has biased composition (basic residues). An interaction with 14-3-3 protein region spans residues His-467–Asp-667. Residues Pro-486–Ser-497 are compositionally biased toward low complexity. The Phorbol-ester/DAG-type zinc finger occupies Thr-499–Cys-551. Over residues Ser-559 to Gln-568 the composition is skewed to polar residues. Over residues Ser-569–Pro-608 the composition is skewed to low complexity. The region spanning Arg-653–Ser-724 is the GRAM domain. ANK repeat units follow at residues Ser-814 to Ser-843, Lys-852 to Glu-883, Asp-887 to Glu-920, Asn-924 to Ile-955, and Ala-959 to Ile-988. A Protein kinase domain is found at Leu-1112–Val-1375. ATP-binding positions include Ile-1118–Val-1126 and Lys-1139. Catalysis depends on Asp-1231, which acts as the Proton acceptor. Residues Met-1293–Tyr-1313 form a helical membrane-spanning segment. A coiled-coil region spans residues Pro-1425 to Asn-1460. The tract at residues Ala-1434 to Asn-1460 is disordered.

The protein belongs to the protein kinase superfamily. TKL Ser/Thr protein kinase family.

It localises to the cytoplasm. The protein localises to the cytoskeleton. Its subcellular location is the membrane. It is found in the nucleus. The enzyme catalyses L-seryl-[protein] + ATP = O-phospho-L-seryl-[protein] + ADP + H(+). The catalysed reaction is L-threonyl-[protein] + ATP = O-phospho-L-threonyl-[protein] + ADP + H(+). In terms of biological role, involved in the development of the fruiting body. Overexpression phenocopies the spnA null phenotype. This Dictyostelium discoideum (Social amoeba) protein is Ankyrin repeat-containing protein kinase A (arkA).